The primary structure comprises 181 residues: Acireductone dioxygenase (181 aa).

4 residues coordinate Fe(2+): His-97, His-99, Glu-103, and His-141. Ni(2+) is bound by residues His-97, His-99, Glu-103, and His-141.

It belongs to the acireductone dioxygenase (ARD) family. Monomer. The cofactor is Fe(2+). Ni(2+) serves as cofactor.

The enzyme catalyses 1,2-dihydroxy-5-(methylsulfanyl)pent-1-en-3-one + O2 = 3-(methylsulfanyl)propanoate + CO + formate + 2 H(+). It catalyses the reaction 1,2-dihydroxy-5-(methylsulfanyl)pent-1-en-3-one + O2 = 4-methylsulfanyl-2-oxobutanoate + formate + 2 H(+). The protein operates within amino-acid biosynthesis; L-methionine biosynthesis via salvage pathway; L-methionine from S-methyl-5-thio-alpha-D-ribose 1-phosphate: step 5/6. In terms of biological role, catalyzes 2 different reactions between oxygen and the acireductone 1,2-dihydroxy-3-keto-5-methylthiopentene (DHK-MTPene) depending upon the metal bound in the active site. Fe-containing acireductone dioxygenase (Fe-ARD) produces formate and 2-keto-4-methylthiobutyrate (KMTB), the alpha-ketoacid precursor of methionine in the methionine recycle pathway. Ni-containing acireductone dioxygenase (Ni-ARD) produces methylthiopropionate, carbon monoxide and formate, and does not lie on the methionine recycle pathway. This Pseudomonas syringae pv. syringae (strain B728a) protein is Acireductone dioxygenase.